The sequence spans 340 residues: tRNA N6-adenosine threonylcarbamoyltransferase (340 aa).

Positions 113 and 117 each coordinate Fe cation. Residues 135-139 (LVSGG), Asp-169, Gly-182, Asp-186, and Asn-274 each bind substrate. Asp-302 lines the Fe cation pocket.

This sequence belongs to the KAE1 / TsaD family. Fe(2+) serves as cofactor.

The protein localises to the cytoplasm. The enzyme catalyses L-threonylcarbamoyladenylate + adenosine(37) in tRNA = N(6)-L-threonylcarbamoyladenosine(37) in tRNA + AMP + H(+). In terms of biological role, required for the formation of a threonylcarbamoyl group on adenosine at position 37 (t(6)A37) in tRNAs that read codons beginning with adenine. Is involved in the transfer of the threonylcarbamoyl moiety of threonylcarbamoyl-AMP (TC-AMP) to the N6 group of A37, together with TsaE and TsaB. TsaD likely plays a direct catalytic role in this reaction. The polypeptide is tRNA N6-adenosine threonylcarbamoyltransferase (Mycolicibacterium vanbaalenii (strain DSM 7251 / JCM 13017 / BCRC 16820 / KCTC 9966 / NRRL B-24157 / PYR-1) (Mycobacterium vanbaalenii)).